Reading from the N-terminus, the 521-residue chain is Apolipoprotein N-acyltransferase (521 aa).

5 helical membrane-spanning segments follow: residues 24–44, 71–91, 128–148, 151–171, and 182–202; these read IKET…FIAL, WLGF…IGYI, IGFL…FNNL, IADI…NSGI, and NLLN…YGMI. A CN hydrolase domain is found at 218–472; the sequence is LNIAAIQLNT…KGYLLSTVKL (255 aa). The Proton acceptor role is filled by Glu-263. Lys-331 is an active-site residue. Residue Cys-383 is the Nucleophile of the active site.

It belongs to the CN hydrolase family. Apolipoprotein N-acyltransferase subfamily.

It localises to the cell inner membrane. It carries out the reaction N-terminal S-1,2-diacyl-sn-glyceryl-L-cysteinyl-[lipoprotein] + a glycerophospholipid = N-acyl-S-1,2-diacyl-sn-glyceryl-L-cysteinyl-[lipoprotein] + a 2-acyl-sn-glycero-3-phospholipid + H(+). It participates in protein modification; lipoprotein biosynthesis (N-acyl transfer). In terms of biological role, catalyzes the phospholipid dependent N-acylation of the N-terminal cysteine of apolipoprotein, the last step in lipoprotein maturation. In Borreliella burgdorferi (strain ATCC 35210 / DSM 4680 / CIP 102532 / B31) (Borrelia burgdorferi), this protein is Apolipoprotein N-acyltransferase.